Consider the following 293-residue polypeptide: 4-diphosphocytidyl-2-C-methyl-D-erythritol kinase (293 aa).

Residue K16 is part of the active site. 99 to 109 (PMGAGLGGGSS) is a binding site for ATP. D141 is a catalytic residue.

This sequence belongs to the GHMP kinase family. IspE subfamily.

The catalysed reaction is 4-CDP-2-C-methyl-D-erythritol + ATP = 4-CDP-2-C-methyl-D-erythritol 2-phosphate + ADP + H(+). It participates in isoprenoid biosynthesis; isopentenyl diphosphate biosynthesis via DXP pathway; isopentenyl diphosphate from 1-deoxy-D-xylulose 5-phosphate: step 3/6. Functionally, catalyzes the phosphorylation of the position 2 hydroxy group of 4-diphosphocytidyl-2C-methyl-D-erythritol. This Burkholderia mallei (strain NCTC 10247) protein is 4-diphosphocytidyl-2-C-methyl-D-erythritol kinase.